Reading from the N-terminus, the 73-residue chain is Large ribosomal subunit protein bL31 (73 aa).

Residues Cys-16, Cys-18, Cys-38, and Cys-41 each coordinate Zn(2+).

Belongs to the bacterial ribosomal protein bL31 family. Type A subfamily. Part of the 50S ribosomal subunit. Zn(2+) is required as a cofactor.

Binds the 23S rRNA. This is Large ribosomal subunit protein bL31 from Streptomyces avermitilis (strain ATCC 31267 / DSM 46492 / JCM 5070 / NBRC 14893 / NCIMB 12804 / NRRL 8165 / MA-4680).